The chain runs to 228 residues: Triosephosphate isomerase (228 aa).

Substrate is bound at residue 11-13 (NFK). The active-site Electrophile is His95. Glu143 acts as the Proton acceptor in catalysis. Substrate is bound by residues Ile148, Gly183, and 204–205 (AS).

The protein belongs to the triosephosphate isomerase family. Homotetramer; dimer of dimers.

Its subcellular location is the cytoplasm. The enzyme catalyses D-glyceraldehyde 3-phosphate = dihydroxyacetone phosphate. It participates in carbohydrate biosynthesis; gluconeogenesis. Its pathway is carbohydrate degradation; glycolysis; D-glyceraldehyde 3-phosphate from glycerone phosphate: step 1/1. In terms of biological role, involved in the gluconeogenesis. Catalyzes stereospecifically the conversion of dihydroxyacetone phosphate (DHAP) to D-glyceraldehyde-3-phosphate (G3P). This chain is Triosephosphate isomerase, found in Pyrococcus horikoshii (strain ATCC 700860 / DSM 12428 / JCM 9974 / NBRC 100139 / OT-3).